Here is a 185-residue protein sequence, read N- to C-terminus: MATPWRCALLMILASQVVILVKCLEDDDVPEEWLLLHVVQGQIGAGNYSYLRLNHEGKIILRMQSLRGDADLYVSDSTPHPSFDEYELQSVTCGQDVVSIPAHFQRPVGIGIYGHPSHHESDFEMRVYYDRTVDQYPFGEAAYAADQTGTSQKQAYTPEEAAQEEESVLWTILISILKLVLEILF.

The N-terminal stretch at 1-23 (MATPWRCALLMILASQVVILVKC) is a signal peptide. The N-linked (GlcNAc...) asparagine glycan is linked to Asn-47.

The protein belongs to the UPF0669 family.

It is found in the secreted. Functionally, may be involved in induction of apoptosis in CD4(+) T-cells, but not CD8(+) T-cells or hepatocytes. The polypeptide is UPF0669 protein C6orf120 homolog (Rattus norvegicus (Rat)).